A 186-amino-acid chain; its full sequence is MTVADAKKTADQKMQKSIETLKADLAKVRTGRAHTGILDHVMVEYYGNPTNLSQVANVTLIDARTIGVQPFEKKMVAVVEKAIREADLGLNPATQGELIRVPTPPLTEERRKEMVKLVKSEAEDAKIAVRNIRRDANESLKKLVKEKACSEDEERRAQDEIQKLTDKFVIEIDKLVVEKEKEVLTV.

It belongs to the RRF family.

The protein localises to the cytoplasm. Its function is as follows. Responsible for the release of ribosomes from messenger RNA at the termination of protein biosynthesis. May increase the efficiency of translation by recycling ribosomes from one round of translation to another. The protein is Ribosome-recycling factor of Janthinobacterium sp. (strain Marseille) (Minibacterium massiliensis).